Here is a 123-residue protein sequence, read N- to C-terminus: Insulin-like peptide-1 (123 aa).

Residues 1-24 (MTTSSYFLLVALGLLLYVCQSSFG) form the signal peptide. Disulfide bonds link Cys-29/Cys-106, Cys-41/Cys-109, Cys-53/Cys-122, and Cys-108/Cys-113. Position 34 is a 4-hydroxyproline; partial (Pro-34). Residues 59 to 102 (EQGGANNARAYTGRTSSLMKRRGFLSLLKKRGKRDEGSLQRSGR) constitute a propeptide, c peptide. Glu-107 carries the post-translational modification 4-carboxyglutamate. The residue at position 117 (Glu-117) is a 4-carboxyglutamate; partial.

It belongs to the insulin family. In terms of assembly, heterodimer of A and B chains; disulfide-linked. Expressed by the venom duct.

It is found in the secreted. Its function is as follows. This venom insulin facilitates prey capture by rapidly inducing hypoglycemic shock. Intraperitoneal injection of this peptide into zebrafish lowers blood glucose with the same potency than human insulin. In vivo, when applied to water, this peptide reduces overall locomotor activity of zebrafish larvae, observed as a significant decrease in the percentage of time spent swimming and movement frequency. This Conus victoriae (Queen Victoria cone) protein is Insulin-like peptide-1.